The chain runs to 661 residues: UvrABC system protein B (661 aa).

One can recognise a Helicase ATP-binding domain in the interval 25–414 (AGLNSKKRSQ…DTVVELIIRP (390 aa)). An ATP-binding site is contributed by 38-45 (GITGSGKT). The Beta-hairpin signature appears at 91–114 (YYDYYQPEAYIARTDTFIEKDSSI). The region spanning 430-592 (QVEDLIGEIQ…IIPKTINRAI (163 aa)) is the Helicase C-terminal domain. The UVR domain occupies 621 to 656 (KAHIEKLKKDMLKAASNLEFEQAAKLRDQLKTLEEA).

This sequence belongs to the UvrB family. In terms of assembly, forms a heterotetramer with UvrA during the search for lesions. Interacts with UvrC in an incision complex.

It is found in the cytoplasm. Functionally, the UvrABC repair system catalyzes the recognition and processing of DNA lesions. A damage recognition complex composed of 2 UvrA and 2 UvrB subunits scans DNA for abnormalities. Upon binding of the UvrA(2)B(2) complex to a putative damaged site, the DNA wraps around one UvrB monomer. DNA wrap is dependent on ATP binding by UvrB and probably causes local melting of the DNA helix, facilitating insertion of UvrB beta-hairpin between the DNA strands. Then UvrB probes one DNA strand for the presence of a lesion. If a lesion is found the UvrA subunits dissociate and the UvrB-DNA preincision complex is formed. This complex is subsequently bound by UvrC and the second UvrB is released. If no lesion is found, the DNA wraps around the other UvrB subunit that will check the other stand for damage. This chain is UvrABC system protein B, found in Rickettsia felis (strain ATCC VR-1525 / URRWXCal2) (Rickettsia azadi).